A 122-amino-acid chain; its full sequence is Large ribosomal subunit protein uL14 (122 aa).

It belongs to the universal ribosomal protein uL14 family. Part of the 50S ribosomal subunit. Forms a cluster with proteins L3 and L19. In the 70S ribosome, L14 and L19 interact and together make contacts with the 16S rRNA in bridges B5 and B8.

Its function is as follows. Binds to 23S rRNA. Forms part of two intersubunit bridges in the 70S ribosome. This Thermosipho melanesiensis (strain DSM 12029 / CIP 104789 / BI429) protein is Large ribosomal subunit protein uL14.